A 418-amino-acid chain; its full sequence is uncharacterized protein (418 aa).

A compositionally biased stretch (basic and acidic residues) spans 282 to 297 (EEHSSIAKLDSEEKIR). The segment at 282–346 (EEHSSIAKLD…SASVDDVSEE (65 aa)) is disordered. Low complexity predominate over residues 304-316 (SSTSLSPDPTSDN). The span at 322–337 (WVSSQDTSKNSSNLAS) shows a compositional bias: polar residues.

This is an uncharacterized protein from Schizosaccharomyces pombe (strain 972 / ATCC 24843) (Fission yeast).